The primary structure comprises 963 residues: Bifunctional glutamine synthetase adenylyltransferase/adenylyl-removing enzyme (963 aa).

The adenylyl removase stretch occupies residues 1 to 451; the sequence is MAAPSELQLY…EHFADIIAER (451 aa). Positions 461 to 963 are adenylyl transferase; sequence TIEWKALWAG…VAFWEKVFAE (503 aa).

It belongs to the GlnE family. It depends on Mg(2+) as a cofactor.

The enzyme catalyses [glutamine synthetase]-O(4)-(5'-adenylyl)-L-tyrosine + phosphate = [glutamine synthetase]-L-tyrosine + ADP. It carries out the reaction [glutamine synthetase]-L-tyrosine + ATP = [glutamine synthetase]-O(4)-(5'-adenylyl)-L-tyrosine + diphosphate. Its function is as follows. Involved in the regulation of glutamine synthetase GlnA, a key enzyme in the process to assimilate ammonia. When cellular nitrogen levels are high, the C-terminal adenylyl transferase (AT) inactivates GlnA by covalent transfer of an adenylyl group from ATP to specific tyrosine residue of GlnA, thus reducing its activity. Conversely, when nitrogen levels are low, the N-terminal adenylyl removase (AR) activates GlnA by removing the adenylyl group by phosphorolysis, increasing its activity. The regulatory region of GlnE binds the signal transduction protein PII (GlnB) which indicates the nitrogen status of the cell. The protein is Bifunctional glutamine synthetase adenylyltransferase/adenylyl-removing enzyme of Hahella chejuensis (strain KCTC 2396).